The chain runs to 429 residues: G2/mitotic-specific cyclin-B1 (429 aa).

The segment at 71–114 is disordered; the sequence is TGKVSAKIPPPKPLEKVPPVSEPEVELAETHEPEPVMDEKLSPE. Position 73 is an N6-acetyllysine (lysine 73). Positions 98-112 are enriched in basic and acidic residues; that stretch reads AETHEPEPVMDEKLS. At serine 122 the chain carries Phosphoserine; by CDK1. A Phosphoserine modification is found at serine 124. Position 129 is a phosphoserine; by PLK1 (serine 129). A Phosphoserine modification is found at serine 143. Interaction with CDK2 stretches follow at residues 165–173 and 254–257; these read EYVKDIYAY and YEEM. The residue at position 317 (threonine 317) is a Phosphothreonine.

It belongs to the cyclin family. Cyclin AB subfamily. In terms of assembly, interacts with the CDC2 protein kinase to form a serine/threonine kinase holoenzyme complex also known as maturation promoting factor (MPF). The cyclin subunit imparts substrate specificity to the complex. Binds HEI10. Interacts with catalytically active RALBP1 and CDC2 during mitosis to form an endocytotic complex during interphase. Interacts with CCNF; interaction is required for nuclear localization. Interacts with CDK5RAP3. Interacts with RFPL4A and UBE2A. Interacts with INCA1. Post-translationally, ubiquitinated by the SCF(NIPA) complex during interphase, leading to its destruction. Not ubiquitinated during G2/M phases. In terms of processing, phosphorylated by PLK1 at Ser-129 on centrosomes during prophase: phosphorylation by PLK1 does not cause nuclear import. Phosphorylation at Ser-143 was also reported to be mediated by PLK1 but Ser-129 seems to be the primary phosphorylation site.

The protein resides in the cytoplasm. Its subcellular location is the nucleus. The protein localises to the cytoskeleton. It is found in the microtubule organizing center. It localises to the centrosome. In terms of biological role, essential for the control of the cell cycle at the G2/M (mitosis) transition. The sequence is that of G2/mitotic-specific cyclin-B1 (CCNB1) from Mesocricetus auratus (Golden hamster).